A 475-amino-acid chain; its full sequence is MAAGRLRGLAVAGGGESSESDDDGWEIGYLDRASQKLKGVLPTEEKNETFKKALTTGDISLVQELLNSGISVDSSFRYGWTPLMYAASVSNVELVRVLLDRGANANFDKDKQTILITTCSSRGSEEQIVKCVELLLSRNADPNVPCRRLMTPIMYAARDGHPQVVALLVAHGAEVNTQDESGYTALTWAARQGHKNVVLKLLELGADKMLQTKDGNIPSEIAKRYKHLEIFSLLSLSLNPLKGKLQQQTKEETICKLLATDSDKEKDHIFSSYTAFGDLEVFLHGLGLEHMTDLLKERDITLRHLLTMRKDEFTKNGITSRDQQKILAALKELDVEEIKFGELPEVAKLEISGDEFLNFLLKLNKQCGHLITAVENIITELPVNSHKIVLEWASPQSFTSVCEELVSNVEDLSEEVCKLKDLIKKLQNERENDPTHMPLVEEVSTWNSRMLKRTAITVCGFGFLLFICKLTFLRK.

The segment covering Met-1 to Ala-10 has biased composition (low complexity). The segment at Met-1–Gly-24 is disordered. Ser-17, Ser-18, and Ser-20 each carry phosphoserine. 6 ANK repeats span residues Glu-45 to Ser-74, Tyr-78 to Phe-107, Asp-110 to Val-144, Arg-148 to Thr-177, Ser-181 to Leu-210, and Asp-214 to Gly-243. One can recognise an SAM domain in the interval Ser-272–Asp-334.

Interacts with DDX4, PIWIL1, RANBP9 and TDRD1.

The protein resides in the cytoplasm. In terms of biological role, plays a central role during spermatogenesis by repressing transposable elements and preventing their mobilization, which is essential for the germline integrity. Acts via the piRNA metabolic process, which mediates the repression of transposable elements during meiosis by forming complexes composed of piRNAs and Piwi proteins and governs the methylation and subsequent repression of transposons. Its association with pi-bodies suggests a participation in the primary piRNAs metabolic process. Required prior to the pachytene stage to facilitate the production of multiple types of piRNAs, including those associated with repeats involved in the regulation of retrotransposons. May act by mediating protein-protein interactions during germ cell maturation. This chain is Ankyrin repeat, SAM and basic leucine zipper domain-containing protein 1 (ASZ1), found in Carollia perspicillata (Seba's short-tailed bat).